The primary structure comprises 245 residues: 3-deoxy-manno-octulosonate cytidylyltransferase (245 aa).

This sequence belongs to the KdsB family.

It is found in the cytoplasm. It catalyses the reaction 3-deoxy-alpha-D-manno-oct-2-ulosonate + CTP = CMP-3-deoxy-beta-D-manno-octulosonate + diphosphate. It functions in the pathway nucleotide-sugar biosynthesis; CMP-3-deoxy-D-manno-octulosonate biosynthesis; CMP-3-deoxy-D-manno-octulosonate from 3-deoxy-D-manno-octulosonate and CTP: step 1/1. Its pathway is bacterial outer membrane biogenesis; lipopolysaccharide biosynthesis. Functionally, activates KDO (a required 8-carbon sugar) for incorporation into bacterial lipopolysaccharide in Gram-negative bacteria. The chain is 3-deoxy-manno-octulosonate cytidylyltransferase from Acidobacterium capsulatum (strain ATCC 51196 / DSM 11244 / BCRC 80197 / JCM 7670 / NBRC 15755 / NCIMB 13165 / 161).